Here is a 673-residue protein sequence, read N- to C-terminus: MSKSFVLHSAFRPSGDQPEAIRRLEEGLEDGLAHQTLLGVTGSGKTFTIANVIADLQRPTMVLAPNKTLAAQLYGEMKEFFPENAVEYFVSYYDYYQPEAYVPSSDTFIEKDASVNEHIEQMRLSATKALLERRDVVVVASVSAIYGLGDPDLYLKMMLHLTVGMLIDQRAILRRLAELQYTRNDQAFQRGTFRVRGEVIDVFPAESDDIALRIELFDEEVERLSLFDPLTGHVESTVPRYTIYPKTHYVTPRERIVQAMEEIKLELAERRKVLLANNKLLEEQRLTQRTQFDLEMMNELGYCSGIENYSRFLSGRGPGEPPPTLFDYLPADGLLVIDESHVTVPQIGGMYRGDRARKETLVEYGFRLPSALDNRPMKFEEFEALAPQTIYVSATPGAYELDKSGGEVVDQVVRPTGLLDPIIEVRPVATQVDDLLSEIRLRTAINERVLVTTLTKRMAEDLTEYLEEHGERVRYLHSDIDTVERMEIIRDLRLGEFDVLVGINLLREGLDMPEVSLVAILDADKEGFLRSERSLIQTIGRAARNINGKAILYGDKITPSMAKAIGETERRREKQQRYNEEHGIVPQGLNKKVVDILQLGQGLAKTKAKGRGKAKAVEPAGLSAVEMTPKALQQKIHELEGQMMQHAQNLEFEEAAQIRDQLHQLRELFIAAS.

The 158-residue stretch at 26-183 (EGLEDGLAHQ…RRLAELQYTR (158 aa)) folds into the Helicase ATP-binding domain. Residue 39-46 (GVTGSGKT) participates in ATP binding. The Beta-hairpin motif lies at 92–115 (YYDYYQPEAYVPSSDTFIEKDASV). The 167-residue stretch at 431–597 (QVDDLLSEIR…GLNKKVVDIL (167 aa)) folds into the Helicase C-terminal domain. Residues 633 to 668 (QQKIHELEGQMMQHAQNLEFEEAAQIRDQLHQLREL) enclose the UVR domain.

The protein belongs to the UvrB family. As to quaternary structure, forms a heterotetramer with UvrA during the search for lesions. Interacts with UvrC in an incision complex.

It localises to the cytoplasm. In terms of biological role, the UvrABC repair system catalyzes the recognition and processing of DNA lesions. A damage recognition complex composed of 2 UvrA and 2 UvrB subunits scans DNA for abnormalities. Upon binding of the UvrA(2)B(2) complex to a putative damaged site, the DNA wraps around one UvrB monomer. DNA wrap is dependent on ATP binding by UvrB and probably causes local melting of the DNA helix, facilitating insertion of UvrB beta-hairpin between the DNA strands. Then UvrB probes one DNA strand for the presence of a lesion. If a lesion is found the UvrA subunits dissociate and the UvrB-DNA preincision complex is formed. This complex is subsequently bound by UvrC and the second UvrB is released. If no lesion is found, the DNA wraps around the other UvrB subunit that will check the other stand for damage. This is UvrABC system protein B from Klebsiella pneumoniae (strain 342).